The following is a 206-amino-acid chain: GTP-binding protein YPT1 (206 aa).

Methionine 1 carries the post-translational modification N-acetylmethionine. Residues 17–23 (SGVGKSC), 33–40 (YTNDYIST), glycine 66, and 121–124 (NKCD) contribute to the GTP site. Cysteine 23 is lipidated: S-palmitoyl cysteine. The Effector region motif lies at 37–45 (YISTIGVDF). Residues 63–80 (DTAGQERFRTITSSYYRG) are interaction with GDI1. Cysteine 123 is lipidated: S-palmitoyl cysteine. Lysine 144 participates in a covalent cross-link: Glycyl lysine isopeptide (Lys-Gly) (interchain with G-Cter in ubiquitin). 152 to 153 (AL) contributes to the GTP binding site. Serine 172 and serine 174 each carry phosphoserine. The interval 173–206 (MSQQNLNETTQKKEDKGNVNLKGQSLTNTGGGCC) is disordered. Residues 189–195 (GNVNLKG) form an interaction with GDI1 region. S-geranylgeranyl cysteine attachment occurs at residues cysteine 205 and cysteine 206.

This sequence belongs to the small GTPase superfamily. Rab family. Forms a complex with the Rab escort protein (REP) MRS6, which is recognized by Rab geranylgeranyltransferase BET2-BET4. Interacts with the Rab GDP dissociation inhibitor GDI1, which can retrieve from and deliver to membranes the GDP-bound and prenylated form of YPT1. Interacts with YIP1, which is required for proper membrane targeting of prenylated YPT1. Interacts with YIF1, YIP3, YIP4 and YIP5. Post-translationally, prenylation is required for interaction with GDI1 and YIP1.

It is found in the endoplasmic reticulum membrane. It localises to the golgi apparatus membrane. The protein resides in the cytoplasm. The protein localises to the preautophagosomal structure membrane. With respect to regulation, rab activation is generally mediated by a guanine exchange factor (GEF), while inactivation through hydrolysis of bound GTP is catalyzed by a GTPase activating protein (GAP). YPT1 is activated by the GEFs DSS4 and TRAPP complex, and inactivated by GAPs GYP1, GYP5 and GYP8. The small GTPases Rab are key regulators of intracellular membrane trafficking, from the formation of transport vesicles to their fusion with membranes. Rabs cycle between an inactive GDP-bound form and an active GTP-bound form that is able to recruit to membranes different set of downstream effectors directly responsible for vesicle formation, movement, tethering and fusion. YPT1 regulates the trafficking of secretory vesicles from the endoplasmic reticulum (ER) to the Golgi. Vesicular transport depends on shuttling of YPT1 between membrane and cytosol by GDI1, probably by recycling it to its membrane of origin after a vesicle fusion event. Plays a role in the initial events of the autophagic vacuole development which take place at specialized regions of the endoplasmic reticulum. Also involved in the recycling of membrane proteins. This Saccharomyces cerevisiae (strain ATCC 204508 / S288c) (Baker's yeast) protein is GTP-binding protein YPT1 (YPT1).